A 170-amino-acid polypeptide reads, in one-letter code: Ecotin (170 aa).

The signal sequence occupies residues 1-21 (MNKASVVFSGLLMAVSASAIA). A disulfide bridge connects residues cysteine 78 and cysteine 115.

It belongs to the protease inhibitor I11 (ecotin) family. Homodimer.

It localises to the periplasm. Functionally, general inhibitor of pancreatic serine proteases: inhibits chymotrypsin, trypsin, elastases, factor X, kallikrein as well as a variety of other proteases. The polypeptide is Ecotin (Serratia proteamaculans (strain 568)).